Here is a 176-residue protein sequence, read N- to C-terminus: Ferritin heavy polypeptide-like 17E (176 aa).

In terms of domain architecture, Ferritin-like diiron spans 10 to 159 (QNYDWQCEDA…GYLTNLRQMG (150 aa)). Residues Cys-27, Glu-107, and Gln-141 each coordinate Fe cation.

It belongs to the ferritin family. Expressed in the testes and spermatogonia.

This chain is Ferritin heavy polypeptide-like 17E, found in Mus musculus (Mouse).